Consider the following 169-residue polypeptide: MDDRLILMGVIGRPHGVRGAVHVTTYSPDPEGLAELPLRDERGRRVGLAWTGAGIARVTIGEGDEAAAIADRDAAAKLTNLRLYVRRADLPPPEDEDEFYFADLIGLHAVGPDGAALGTIRAVHDFGAGASIELSDGSLLPFTRAVVPEIDLPGGRAVVVRPVEVEMRE.

Positions 96–166 constitute a PRC barrel domain; the sequence is EDEFYFADLI…AVVVRPVEVE (71 aa).

Belongs to the RimM family. Binds ribosomal protein uS19.

It localises to the cytoplasm. In terms of biological role, an accessory protein needed during the final step in the assembly of 30S ribosomal subunit, possibly for assembly of the head region. Essential for efficient processing of 16S rRNA. May be needed both before and after RbfA during the maturation of 16S rRNA. It has affinity for free ribosomal 30S subunits but not for 70S ribosomes. The polypeptide is Ribosome maturation factor RimM (Acidiphilium cryptum (strain JF-5)).